The primary structure comprises 398 residues: tRNA-specific 2-thiouridylase MnmA (398 aa).

ATP-binding positions include 18-25 (AMSGGVDS) and leucine 44. Residue cysteine 112 is the Nucleophile of the active site. A disulfide bridge links cysteine 112 with cysteine 213. Glycine 136 is a binding site for ATP. Residues 163 to 165 (RDQ) are interaction with tRNA. Cysteine 213 (cysteine persulfide intermediate) is an active-site residue.

The protein belongs to the MnmA/TRMU family.

The protein resides in the cytoplasm. It catalyses the reaction S-sulfanyl-L-cysteinyl-[protein] + uridine(34) in tRNA + AH2 + ATP = 2-thiouridine(34) in tRNA + L-cysteinyl-[protein] + A + AMP + diphosphate + H(+). Functionally, catalyzes the 2-thiolation of uridine at the wobble position (U34) of tRNA, leading to the formation of s(2)U34. In Sinorhizobium medicae (strain WSM419) (Ensifer medicae), this protein is tRNA-specific 2-thiouridylase MnmA.